Reading from the N-terminus, the 999-residue chain is Collagen alpha-1(I) chain (999 aa).

The segment at 1–999 is disordered; it reads SYGYDEKSAG…PGPPGPPGPP (999 aa). Allysine is present on K7. The residue at position 8 (S8) is a Phosphoserine. Residues P27, P30, P33, P42, P45, P48, P62, P77, P83, P92, and P98 each carry the 4-hydroxyproline modification. The span at 65–79 shows a compositional bias: basic and acidic residues; that stretch reads NGDDGEAGKPGRPGE. A 5-hydroxylysine; alternate modification is found at K101. O-linked (Gal...) hydroxylysine; alternate glycosylation occurs at K101. S107 is subject to Phosphoserine. The segment covering 115-131 has biased composition (low complexity); sequence DAGPAGPKGEPGSPGEN. P125, P128, P134, P143, P149, P170, P179, P182, P209, P212, P224, P230, P239, P245, P248, and P263 each carry 4-hydroxyproline. Residues 149–167 show a composition bias toward low complexity; it reads PGASGPAGARGNDGATGAA. The segment covering 169–181 has biased composition (pro residues); the sequence is PPGPTGPAGPPGF. The segment covering 215–254 has biased composition (low complexity); sequence AGAAGPAGNPGADGQPGAKGANGAPGIAGAPGFPGARGPS. K266 is modified (5-hydroxylysine). 8 positions are modified to 4-hydroxyproline: P272, P275, P287, P296, P311, P317, P326, and P332. Gly residues predominate over residues 321 to 330; the sequence is GERGGPGSRG. K341 carries the 5-hydroxylysine modification. 4-hydroxyproline is present on residues P350, P359, P365, P371, P380, P383, P392, P401, P407, P419, P429, P432, P450, P468, P474, P480, P486, P492, P498, P510, P526, P532, P538, and P547. A compositionally biased stretch (low complexity) spans 374–400; sequence KGLTGSPGSPGPDGKTGPPGPAGQDGR. A compositionally biased stretch (low complexity) spans 462–489; sequence QGPAGSPGFQGLPGPAGPPGEAGKPGEQ. Over residues 522 to 535 the composition is skewed to low complexity; that stretch reads APGAPGSQGAPGLQ. Residue K559 is modified to 5-hydroxylysine. 4-hydroxyproline is present on residues P565, P580, and P586. Residues 592–606 are compositionally biased toward low complexity; that stretch reads SGPSGPAGPTGARGA. S595 bears the Phosphoserine mark. A 4-hydroxyproline mark is found at P607, P613, P616, P625, P631, P649, P658, and P667. The segment covering 619 to 646 has biased composition (low complexity); the sequence is AGFAGPPGADGQPGAKGEPGDAGAKGDA. Pro residues predominate over residues 648–660; that stretch reads PPGPAGPTGPPGP. The residue at position 670 (K670) is a 5-hydroxylysine. The segment covering 675–691 has biased composition (low complexity); it reads SAGPPGATGFPGAAGRV. Residues P679 and P685 each carry the 4-hydroxyproline modification. At P693 the chain carries 3-hydroxyproline. 4-hydroxyproline is present on residues P694, P703, P706, P727, P736, P745, P754, P772, P781, P784, P790, P805, P811, P817, P826, and P832. The segment covering 720–729 has biased composition (low complexity); it reads ETGPAGRPGE. The span at 739–754 shows a compositional bias: low complexity; sequence SGEKGSPGADGPAGAP. The segment covering 804–814 has biased composition (pro residues); the sequence is PPGPVGPPGLA. The segment covering 816–831 has biased composition (low complexity); it reads PPGESGREGSPGAEGS. K841 is modified (5-hydroxylysine). Residues 849 to 864 are compositionally biased toward pro residues; it reads PGPPGAPGAPGAPGPV. 3 positions are modified to 4-hydroxyproline: P852, P855, and P858. Positions 885 to 899 are enriched in low complexity; that stretch reads AGPAGARGPAGPQGP. Residues 900 to 914 show a composition bias toward basic and acidic residues; that stretch reads RGDKGETGEQGDRGI. At K903 the chain carries 5-hydroxylysine. Position 915 is a 5-hydroxylysine; alternate (K915). An O-linked (Gal...) hydroxylysine; alternate glycan is attached at K915. 4-hydroxyproline occurs at positions 930, 933, 951, and 966. Over residues 933–966 the composition is skewed to low complexity; that stretch reads PGEQGPSGASGPAGPRGPPGSAGSPGKDGLNGLP. A 3-hydroxyproline modification is found at P971. 4-hydroxyproline is present on P972. Positions 984–999 are enriched in pro residues; that stretch reads VGPPGPPGPPGPPGPP. At P986 the chain carries 3-hydroxyproline. At P987 the chain carries 4-hydroxyproline. P989 is subject to 3-hydroxyproline. Residue P990 is modified to 4-hydroxyproline. A 3-hydroxyproline modification is found at P992. P993, P996, and P999 each carry 4-hydroxyproline.

It belongs to the fibrillar collagen family. Trimers of one alpha 2(I) and two alpha 1(I) chains. Contains mostly 4-hydroxyproline. Proline residues at the third position of the tripeptide repeating unit (G-X-Y) are hydroxylated in some or all of the chains. Post-translationally, contains 3-hydroxyproline at a few sites. This modification occurs on the first proline residue in the sequence motif Gly-Pro-Hyp, where Hyp is 4-hydroxyproline. In terms of processing, lysine residues at the third position of the tripeptide repeating unit (G-X-Y) are 5-hydroxylated in some or all of the chains. O-glycosylated on hydroxylated lysine residues. The O-linked glycan consists of a Glc-Gal disaccharide. Expressed in bones.

Its subcellular location is the secreted. It is found in the extracellular space. The protein localises to the extracellular matrix. In terms of biological role, type I collagen is a member of group I collagen (fibrillar forming collagen). This Choloepus hoffmanni (Hoffmann's two-fingered sloth) protein is Collagen alpha-1(I) chain.